A 148-amino-acid chain; its full sequence is Transcriptional regulator MraZ (148 aa).

SpoVT-AbrB domains are found at residues valine 5 to asparagine 51 and alanine 80 to glutamate 123.

Belongs to the MraZ family. Forms oligomers.

It is found in the cytoplasm. It localises to the nucleoid. The sequence is that of Transcriptional regulator MraZ from Chromobacterium violaceum (strain ATCC 12472 / DSM 30191 / JCM 1249 / CCUG 213 / NBRC 12614 / NCIMB 9131 / NCTC 9757 / MK).